The chain runs to 159 residues: TADNMLNALFYFLLRNPQCLKRLEEEVSCVGATVNELSDDRLAKLPYLNACINETFRIAPAFNGGILQRVSCGATVDGVYVPPGVAVSVDHYTLGHDPQYWVKPDVFNPERWIDPDCKDNFKASRPFLIGARQCPGRQMAYQMFRVCVAKLVYLYTFEL.

Cys134 contributes to the heme binding site.

This sequence belongs to the cytochrome P450 family. The cofactor is heme.

The enzyme catalyses 2 fonsecin B + NADPH + O2 + H(+) = aurasperone B + NADP(+) + 2 H2O. It carries out the reaction 2 rubrofusarin B + NADPH + O2 + H(+) = aurasperone A + NADP(+) + 2 H2O. It participates in secondary metabolite biosynthesis. Its function is as follows. Cytochrome P450 monooxygenase; part of the gene cluster that mediates the biosynthesis of aurasperone B, a dimeric gamma-naphthopyrone. The first step in the biosynthesis of aurasperone B is the production of gamma-naphthopyrone precursor YWA1 by the non-reducing polyketide synthase albA, via condensation of one acetyl-CoA starter unit with 6 malonyl-CoA units. YWA1 is then methylated by aunE at position C-6 to yield foncesin which is further methylated at position C-8 by aunD to produce fonsecin B. A key enzyme in the biosynthetic pathway is the cytochrome P450 monooxygenase aunB which catalyzes the oxidative dimerization of fonsecin B to aurasperone B. AunB also catalyzes the oxidative dimerization of rubrofusarin B into aurasperone A. The chain is Cytochrome P450 monooxygenase aunB from Aspergillus niger (strain ATCC 1015 / CBS 113.46 / FGSC A1144 / LSHB Ac4 / NCTC 3858a / NRRL 328 / USDA 3528.7).